The primary structure comprises 257 residues: Imidazole glycerol phosphate synthase subunit HisF (257 aa).

Catalysis depends on residues Asp11 and Asp130.

This sequence belongs to the HisA/HisF family. In terms of assembly, heterodimer of HisH and HisF.

The protein localises to the cytoplasm. It catalyses the reaction 5-[(5-phospho-1-deoxy-D-ribulos-1-ylimino)methylamino]-1-(5-phospho-beta-D-ribosyl)imidazole-4-carboxamide + L-glutamine = D-erythro-1-(imidazol-4-yl)glycerol 3-phosphate + 5-amino-1-(5-phospho-beta-D-ribosyl)imidazole-4-carboxamide + L-glutamate + H(+). It functions in the pathway amino-acid biosynthesis; L-histidine biosynthesis; L-histidine from 5-phospho-alpha-D-ribose 1-diphosphate: step 5/9. IGPS catalyzes the conversion of PRFAR and glutamine to IGP, AICAR and glutamate. The HisF subunit catalyzes the cyclization activity that produces IGP and AICAR from PRFAR using the ammonia provided by the HisH subunit. The polypeptide is Imidazole glycerol phosphate synthase subunit HisF (Prochlorococcus marinus (strain MIT 9515)).